We begin with the raw amino-acid sequence, 220 residues long: B-cell antigen receptor complex-associated protein alpha chain (220 aa).

The signal sequence occupies residues methionine 1–alanine 28. The region spanning leucine 29–leucine 117 is the Ig-like C2-type domain. Topologically, residues leucine 29–arginine 137 are extracellular. An intrachain disulfide couples cysteine 50 to cysteine 101. 2 N-linked (GlcNAc...) asparagine glycosylation sites follow: asparagine 58 and asparagine 68. Residues isoleucine 138–phenylalanine 159 traverse the membrane as a helical segment. At arginine 160–proline 220 the chain is on the cytoplasmic side. In terms of domain architecture, ITAM spans aspartate 171–glycine 199. 2 positions are modified to phosphotyrosine; by SRC-type Tyr-kinases: tyrosine 182 and tyrosine 193. Arginine 198 carries the post-translational modification Asymmetric dimethylarginine; by PRMT1. Tyrosine 204 carries the phosphotyrosine; by Tyr-kinases modification.

As to quaternary structure, heterodimer of alpha and beta chains; disulfide-linked. Part of the B-cell antigen receptor complex where the alpha/beta chain heterodimer is non-covalently associated with an antigen-specific membrane-bound surface immunoglobulin of two heavy chains and two light chains. Interacts through its phosphorylated ITAM domain with the SH2 domains of SYK which stimulates SYK autophosphorylation and activation. Also interacts, when phosphorylated on Tyr-204, with the SH2 domain of BLNK/SLP65, bringing BLNK into proximity with SYK and allowing SYK to phosphorylate BLNK which is necessary for trafficking of the BCR to late endosomes. Interacts with Src-family tyrosine kinases including FYN and LYN, increasing their activity. In terms of processing, phosphorylated on tyrosine, serine and threonine residues upon B-cell activation. Phosphorylation of tyrosine residues by Src-family kinases, including LYN, is an early and essential feature of the BCR signaling cascade. The phosphorylated tyrosines serve as docking sites for SH2-domain containing kinases, leading to their activation which in turn leads to phosphorylation of downstream targets. Phosphorylation of serine and threonine residues may prevent subsequent tyrosine phosphorylation. Arginine methylation in the ITAM domain may interfere with the binding of SYK. It promotes signals leading to B-cell differentiation. In terms of tissue distribution, B-cells.

It is found in the cell membrane. In terms of biological role, required in cooperation with CD79B for initiation of the signal transduction cascade activated by binding of antigen to the B-cell antigen receptor complex (BCR) which leads to internalization of the complex, trafficking to late endosomes and antigen presentation. Also required for BCR surface expression and for efficient differentiation of pro- and pre-B-cells. Stimulates SYK autophosphorylation and activation. Binds to BLNK, bringing BLNK into proximity with SYK and allowing SYK to phosphorylate BLNK. Also interacts with and increases activity of some Src-family tyrosine kinases. Represses BCR signaling during development of immature B-cells. The chain is B-cell antigen receptor complex-associated protein alpha chain (Cd79a) from Mus musculus (Mouse).